Consider the following 273-residue polypeptide: Type IV secretion system protein PtlF (273 aa).

The first 20 residues, 1-20 (MMAARMMAAGLAATALSAHA), serve as a signal peptide directing secretion.

This sequence belongs to the TrbG/VirB9 family. In terms of assembly, forms a complex with PtlI.

It is found in the cell outer membrane. Its function is as follows. Component of the type IV secretion system ptl required for secretion of assembled pertussis toxin (PTX) through the outer membrane. The chain is Type IV secretion system protein PtlF (ptlF) from Bordetella pertussis (strain Tohama I / ATCC BAA-589 / NCTC 13251).